The following is a 177-amino-acid chain: Superoxide dismutase [Cu-Zn] 1 (177 aa).

The signal sequence occupies residues 1 to 20 (MKYTILSLVAGALISCSAMA). His-69, His-71, and His-94 together coordinate Cu cation. Cysteines 76 and 172 form a disulfide. The Zn(2+) site is built by His-94, His-103, His-112, and Asp-115. His-150 provides a ligand contact to Cu cation.

It belongs to the Cu-Zn superoxide dismutase family. Monomer. It depends on Cu cation as a cofactor. Zn(2+) serves as cofactor.

Its subcellular location is the periplasm. It catalyses the reaction 2 superoxide + 2 H(+) = H2O2 + O2. Its function is as follows. Destroys radicals which are normally produced within the cells and which are toxic to biological systems. This chain is Superoxide dismutase [Cu-Zn] 1 (sodC1), found in Salmonella typhimurium (strain 4/74).